The following is a 634-amino-acid chain: 1-deoxy-D-xylulose-5-phosphate synthase (634 aa).

Thiamine diphosphate is bound by residues His-79 and Gly-120–Ala-122. Asp-151 provides a ligand contact to Mg(2+). Thiamine diphosphate is bound by residues Gly-152–Ser-153, Asn-180, Tyr-292, and Glu-376. Residue Asn-180 participates in Mg(2+) binding.

The protein belongs to the transketolase family. DXPS subfamily. In terms of assembly, homodimer. Mg(2+) is required as a cofactor. The cofactor is thiamine diphosphate.

The catalysed reaction is D-glyceraldehyde 3-phosphate + pyruvate + H(+) = 1-deoxy-D-xylulose 5-phosphate + CO2. Its pathway is metabolic intermediate biosynthesis; 1-deoxy-D-xylulose 5-phosphate biosynthesis; 1-deoxy-D-xylulose 5-phosphate from D-glyceraldehyde 3-phosphate and pyruvate: step 1/1. Its function is as follows. Catalyzes the acyloin condensation reaction between C atoms 2 and 3 of pyruvate and glyceraldehyde 3-phosphate to yield 1-deoxy-D-xylulose-5-phosphate (DXP). In Porphyromonas gingivalis (strain ATCC BAA-308 / W83), this protein is 1-deoxy-D-xylulose-5-phosphate synthase.